The sequence spans 839 residues: Eukaryotic translation initiation factor 3 subunit C (839 aa).

Residues 1–93 (MSRFFVAGYN…DSDSEDEGRR (93 aa)) are disordered. Acidic residues-rich tracts occupy residues 14–27 (SSEE…DEEL) and 34–58 (GEQE…SDSD). The PCI domain occupies 585–759 (FHQHINLELL…AFIQFASTEP (175 aa)). Residues 783 to 839 (EKTSSNGYGKKQPQQQQQQQQQQQQQQQQQKDLLQEDNSRFRYANVNTNNDEFQTTA) are disordered. Low complexity predominate over residues 794–812 (QPQQQQQQQQQQQQQQQQQ). Positions 827 to 839 (NVNTNNDEFQTTA) are enriched in polar residues.

Belongs to the eIF-3 subunit C family. Component of the eukaryotic translation initiation factor 3 (eIF-3) complex.

It is found in the cytoplasm. Component of the eukaryotic translation initiation factor 3 (eIF-3) complex, which is involved in protein synthesis of a specialized repertoire of mRNAs and, together with other initiation factors, stimulates binding of mRNA and methionyl-tRNAi to the 40S ribosome. The eIF-3 complex specifically targets and initiates translation of a subset of mRNAs involved in cell proliferation. The chain is Eukaryotic translation initiation factor 3 subunit C from Scheffersomyces stipitis (strain ATCC 58785 / CBS 6054 / NBRC 10063 / NRRL Y-11545) (Yeast).